A 246-amino-acid polypeptide reads, in one-letter code: Acetoacetate decarboxylase (246 aa).

Lys116 acts as the Schiff-base intermediate with acetoacetate in catalysis.

The protein belongs to the ADC family.

It carries out the reaction acetoacetate + H(+) = acetone + CO2. In terms of biological role, catalyzes the conversion of acetoacetate to acetone and carbon dioxide. The chain is Acetoacetate decarboxylase from Burkholderia cenocepacia (strain ATCC BAA-245 / DSM 16553 / LMG 16656 / NCTC 13227 / J2315 / CF5610) (Burkholderia cepacia (strain J2315)).